We begin with the raw amino-acid sequence, 315 residues long: MVLASGNSSSHPVSFILLGIPGLESFQLWIAFPFCATYAVAVVGNITLLHVIRIDHTLHEPMYLFLAMLAITDLVLSSSTQPKMLAIFWFHAHEIQYHACLIQVFFIHAFSSVESGVLMAMALDCYVAICFPLRHSSILTPSVVIKLGTIVMLRGLLWVSPFCFMVSRMPFCQHQAIPQSYCEHMAVLKLVCADTSISRGNGLFVAFSVAGFDMIVIGMSYVMILRAVLQLPSGEARLKAFSTRSSHICVILALYIPALFSFLTYRFGHDVPRVVHILFANLYLLIPPMLNPIIYGVRTKQIGDRVIQGCCGNIP.

Over 1-28 (MVLASGNSSSHPVSFILLGIPGLESFQL) the chain is Extracellular. N7 carries an N-linked (GlcNAc...) asparagine glycan. The helical transmembrane segment at 29–49 (WIAFPFCATYAVAVVGNITLL) threads the bilayer. Residues 50–57 (HVIRIDHT) lie on the Cytoplasmic side of the membrane. A helical transmembrane segment spans residues 58 to 78 (LHEPMYLFLAMLAITDLVLSS). Over 79-102 (STQPKMLAIFWFHAHEIQYHACLI) the chain is Extracellular. Residues C100 and C192 are joined by a disulfide bond. Residues 103–123 (QVFFIHAFSSVESGVLMAMAL) traverse the membrane as a helical segment. The Cytoplasmic segment spans residues 124–142 (DCYVAICFPLRHSSILTPS). The helical transmembrane segment at 143 to 163 (VVIKLGTIVMLRGLLWVSPFC) threads the bilayer. Over 164 to 199 (FMVSRMPFCQHQAIPQSYCEHMAVLKLVCADTSISR) the chain is Extracellular. A helical transmembrane segment spans residues 200–220 (GNGLFVAFSVAGFDMIVIGMS). Residues 221–240 (YVMILRAVLQLPSGEARLKA) lie on the Cytoplasmic side of the membrane. The helical transmembrane segment at 241–261 (FSTRSSHICVILALYIPALFS) threads the bilayer. The Extracellular segment spans residues 262-276 (FLTYRFGHDVPRVVH). A helical transmembrane segment spans residues 277 to 297 (ILFANLYLLIPPMLNPIIYGV). Topologically, residues 298–315 (RTKQIGDRVIQGCCGNIP) are cytoplasmic.

It belongs to the G-protein coupled receptor 1 family.

The protein localises to the cell membrane. Functionally, odorant receptor. This chain is Olfactory receptor 52R1 (OR52R1), found in Homo sapiens (Human).